The primary structure comprises 148 residues: uncharacterized protein (148 aa).

The next 4 membrane-spanning stretches (helical) occupy residues 29–49, 61–81, 99–119, and 121–141; these read FSLV…AAKE, PIIL…PLVM, FIVF…NGFL, and ILVS…TLCI.

The protein localises to the cell membrane. This is an uncharacterized protein from Bacillus subtilis (strain 168).